Consider the following 697-residue polypeptide: Potassium-transporting ATPase ATP-binding subunit (697 aa).

Helical transmembrane passes span 55–75, 79–99, 245–265, and 271–291; these read PIMFVVEIGFIITFILSFLPS, SIPGWFNITVSLILLFTVLFA, LTLIFLIVVVTLPIFTNYLGF, and VLVALLVCLIPTTIGGLLSAI. Aspartate 324 functions as the 4-aspartylphosphate intermediate in the catalytic mechanism. Residues aspartate 361, glutamate 365, 393–400, and lysine 412 each bind ATP; that span reads FKAETRMS. The Mg(2+) site is built by aspartate 535 and aspartate 539. A run of 3 helical transmembrane segments spans residues 605 to 625, 633 to 653, and 677 to 697; these read FAIIPAMFTLAIPQMEALNIM, AILSALIFNAVIIPLLIPLAM, and GGVIVPFIGIKVIDIIVGLFI.

It belongs to the cation transport ATPase (P-type) (TC 3.A.3) family. Type IA subfamily. The system is composed of three essential subunits: KdpA, KdpB and KdpC.

It is found in the cell membrane. The catalysed reaction is K(+)(out) + ATP + H2O = K(+)(in) + ADP + phosphate + H(+). In terms of biological role, part of the high-affinity ATP-driven potassium transport (or Kdp) system, which catalyzes the hydrolysis of ATP coupled with the electrogenic transport of potassium into the cytoplasm. This subunit is responsible for energy coupling to the transport system and for the release of the potassium ions to the cytoplasm. The chain is Potassium-transporting ATPase ATP-binding subunit from Bacillus cereus (strain ATCC 14579 / DSM 31 / CCUG 7414 / JCM 2152 / NBRC 15305 / NCIMB 9373 / NCTC 2599 / NRRL B-3711).